Consider the following 284-residue polypeptide: Bifunctional protein FolD 1 (284 aa).

NADP(+) is bound by residues Gly166–Ser168 and Ile232.

This sequence belongs to the tetrahydrofolate dehydrogenase/cyclohydrolase family. In terms of assembly, homodimer.

It carries out the reaction (6R)-5,10-methylene-5,6,7,8-tetrahydrofolate + NADP(+) = (6R)-5,10-methenyltetrahydrofolate + NADPH. It catalyses the reaction (6R)-5,10-methenyltetrahydrofolate + H2O = (6R)-10-formyltetrahydrofolate + H(+). Its pathway is one-carbon metabolism; tetrahydrofolate interconversion. In terms of biological role, catalyzes the oxidation of 5,10-methylenetetrahydrofolate to 5,10-methenyltetrahydrofolate and then the hydrolysis of 5,10-methenyltetrahydrofolate to 10-formyltetrahydrofolate. This chain is Bifunctional protein FolD 1, found in Pseudomonas savastanoi pv. phaseolicola (strain 1448A / Race 6) (Pseudomonas syringae pv. phaseolicola (strain 1448A / Race 6)).